We begin with the raw amino-acid sequence, 313 residues long: Ribosomal RNA small subunit methyltransferase H (313 aa).

S-adenosyl-L-methionine contacts are provided by residues 35–37, D55, F79, D101, and Q108; that span reads GGH.

The protein belongs to the methyltransferase superfamily. RsmH family.

It localises to the cytoplasm. The catalysed reaction is cytidine(1402) in 16S rRNA + S-adenosyl-L-methionine = N(4)-methylcytidine(1402) in 16S rRNA + S-adenosyl-L-homocysteine + H(+). Functionally, specifically methylates the N4 position of cytidine in position 1402 (C1402) of 16S rRNA. The protein is Ribosomal RNA small subunit methyltransferase H of Escherichia coli O6:H1 (strain CFT073 / ATCC 700928 / UPEC).